The following is a 233-amino-acid chain: MRKCYVKEFHKLISYSEGIEIQQKAFDFVIRNNIDGILLLLQHKPVITIGKSGGKNNILASKYELDKYSIDLCHTSRGGNVTYHGPGQLVGYPILNLNNFQKDIHLYLRQLELILINTVREYGIKAGIKPKYTGVWVGDRKIAAIGVGIRKWITRHGFAINISVNKEHFKLIVPCGIKEFGVCSLEDFTANVDYNDVVQKIENNFKMIFETDLIKEETVDNLFERSNLNLRIT.

The BPL/LPL catalytic domain maps to 32–213; sequence NNIDGILLLL…NFKMIFETDL (182 aa). Substrate-binding positions include 77 to 84, 144 to 146, and 157 to 159; these read RGGNVTYH, AIG, and GFA. The Acyl-thioester intermediate role is filled by Cys-175.

It belongs to the LipB family.

The protein resides in the cytoplasm. The enzyme catalyses octanoyl-[ACP] + L-lysyl-[protein] = N(6)-octanoyl-L-lysyl-[protein] + holo-[ACP] + H(+). It participates in protein modification; protein lipoylation via endogenous pathway; protein N(6)-(lipoyl)lysine from octanoyl-[acyl-carrier-protein]: step 1/2. Catalyzes the transfer of endogenously produced octanoic acid from octanoyl-acyl-carrier-protein onto the lipoyl domains of lipoate-dependent enzymes. Lipoyl-ACP can also act as a substrate although octanoyl-ACP is likely to be the physiological substrate. This Clostridium kluyveri (strain ATCC 8527 / DSM 555 / NBRC 12016 / NCIMB 10680 / K1) protein is Octanoyltransferase.